The sequence spans 217 residues: 8-oxoguanine DNA glycosylase/AP lyase (217 aa).

Catalysis depends on residues K138 and D157.

Belongs to the type-2 OGG1 family.

It carries out the reaction 2'-deoxyribonucleotide-(2'-deoxyribose 5'-phosphate)-2'-deoxyribonucleotide-DNA = a 3'-end 2'-deoxyribonucleotide-(2,3-dehydro-2,3-deoxyribose 5'-phosphate)-DNA + a 5'-end 5'-phospho-2'-deoxyribonucleoside-DNA + H(+). Its function is as follows. Catalyzes the excision of an oxidatively damaged form of guanine (7,8-dihydro-8-oxoguanine = 8-oxoG) from DNA. Also cleaves the DNA backbone at apurinic/apyrimidinic sites (AP sites). The chain is 8-oxoguanine DNA glycosylase/AP lyase from Fusobacterium nucleatum subsp. nucleatum (strain ATCC 25586 / DSM 15643 / BCRC 10681 / CIP 101130 / JCM 8532 / KCTC 2640 / LMG 13131 / VPI 4355).